We begin with the raw amino-acid sequence, 742 residues long: Photosystem I P700 chlorophyll a apoprotein A2 (742 aa).

A run of 8 helical transmembrane segments spans residues 46 to 69 (LFSTHFGHLAIIALWVAGNLFHIA), 135 to 158 (LFQASIFMSILACWTLFAGWLHLQ), 175 to 199 (LNHHLAVLFGFSSIAWTGHLVHVAI), 273 to 291 (IAHHHIAIGTVFVIAGHMY), 336 to 359 (LHFQLGLALASLGVATSLVAQHMG), 375 to 401 (SALYSHHQYIAMFLMVGAFAHGAIFFV), 423 to 445 (ALISHLSWVTMLLGFHTLGIYVH), and 525 to 543 (FLVHHAIALGLHTTALILI). 2 residues coordinate [4Fe-4S] cluster: Cys-567 and Cys-576. Transmembrane regions (helical) follow at residues 583–604 (AMYLAMFWALNLLAWVTFYWHW) and 651–673 (LSPWAWMFLFGHLVWATGFMFLI). Residues His-662, Met-670, and Tyr-678 each coordinate divinyl chlorophyll a. Position 679 (Trp-679) interacts with phylloquinone. The helical transmembrane segment at 715–735 (LVGLAHFTIGNILTFGAFVIA) threads the bilayer.

It belongs to the PsaA/PsaB family. The PsaA/B heterodimer binds the P700 divinyl chlorophyll special pair and subsequent electron acceptors. PSI consists of a core antenna complex that captures photons, and an electron transfer chain that converts photonic excitation into a charge separation. The cyanobacterial PSI reaction center is composed of one copy each of PsaA,B,C,D,E,F,I,J,K,L,M and X, and forms trimeric complexes. PSI electron transfer chain: 5 divinyl chlorophyll a, 1 divinyl chlorophyll a', 2 phylloquinones and 3 4Fe-4S clusters. PSI core antenna: 90 divinyl chlorophyll a, 22 carotenoids, 3 phospholipids and 1 galactolipid. P700 is a divinyl chlorophyll a/divinyl chlorophyll a' dimer, A0 is one or more divinyl chlorophyll a, A1 is one or both phylloquinones and FX is a shared 4Fe-4S iron-sulfur center. is required as a cofactor.

The protein localises to the cellular thylakoid membrane. The catalysed reaction is reduced [plastocyanin] + hnu + oxidized [2Fe-2S]-[ferredoxin] = oxidized [plastocyanin] + reduced [2Fe-2S]-[ferredoxin]. In terms of biological role, psaA and PsaB bind P700, the primary electron donor of photosystem I (PSI), as well as the electron acceptors A0, A1 and FX. PSI is a plastocyanin/cytochrome c6-ferredoxin oxidoreductase, converting photonic excitation into a charge separation, which transfers an electron from the donor P700 chlorophyll pair to the spectroscopically characterized acceptors A0, A1, FX, FA and FB in turn. Oxidized P700 is reduced on the lumenal side of the thylakoid membrane by plastocyanin or cytochrome c6. In Prochlorococcus marinus (strain MIT 9301), this protein is Photosystem I P700 chlorophyll a apoprotein A2.